We begin with the raw amino-acid sequence, 218 residues long: 2-phospho-L-lactate guanylyltransferase (218 aa).

The protein belongs to the CofC family. In terms of assembly, homodimer.

It catalyses the reaction (2S)-2-phospholactate + GTP + H(+) = (2S)-lactyl-2-diphospho-5'-guanosine + diphosphate. It functions in the pathway cofactor biosynthesis; coenzyme F420 biosynthesis. Its function is as follows. Guanylyltransferase that catalyzes the activation of (2S)-2-phospholactate (2-PL) as (2S)-lactyl-2-diphospho-5'-guanosine, via the condensation of 2-PL with GTP. It is involved in the biosynthesis of coenzyme F420, a hydride carrier cofactor. The polypeptide is 2-phospho-L-lactate guanylyltransferase (Methanocaldococcus fervens (strain DSM 4213 / JCM 15782 / AG86) (Methanococcus fervens)).